The following is a 64-amino-acid chain: Non-structural protein 3b (64 aa).

This Avian infectious bronchitis virus (strain Beaudette) (IBV) protein is Non-structural protein 3b.